The chain runs to 206 residues: Small ribosomal subunit protein uS4 (206 aa).

An S4 RNA-binding domain is found at 98–176 (RRLDNVVYRL…APKWLEANRE (79 aa)).

It belongs to the universal ribosomal protein uS4 family. As to quaternary structure, part of the 30S ribosomal subunit. Contacts protein S5. The interaction surface between S4 and S5 is involved in control of translational fidelity.

One of the primary rRNA binding proteins, it binds directly to 16S rRNA where it nucleates assembly of the body of the 30S subunit. In terms of biological role, with S5 and S12 plays an important role in translational accuracy. This Gloeobacter violaceus (strain ATCC 29082 / PCC 7421) protein is Small ribosomal subunit protein uS4.